Consider the following 282-residue polypeptide: UDP-3-O-acyl-N-acetylglucosamine deacetylase (282 aa).

Zn(2+) is bound by residues His81, His239, and Asp243. His266 functions as the Proton donor in the catalytic mechanism.

This sequence belongs to the LpxC family. It depends on Zn(2+) as a cofactor.

It catalyses the reaction a UDP-3-O-[(3R)-3-hydroxyacyl]-N-acetyl-alpha-D-glucosamine + H2O = a UDP-3-O-[(3R)-3-hydroxyacyl]-alpha-D-glucosamine + acetate. It functions in the pathway glycolipid biosynthesis; lipid IV(A) biosynthesis; lipid IV(A) from (3R)-3-hydroxytetradecanoyl-[acyl-carrier-protein] and UDP-N-acetyl-alpha-D-glucosamine: step 2/6. Its function is as follows. Catalyzes the hydrolysis of UDP-3-O-myristoyl-N-acetylglucosamine to form UDP-3-O-myristoylglucosamine and acetate, the committed step in lipid A biosynthesis. In Chlamydia pneumoniae (Chlamydophila pneumoniae), this protein is UDP-3-O-acyl-N-acetylglucosamine deacetylase.